A 319-amino-acid chain; its full sequence is Probable NAD(P)H-dependent D-xylose reductase xyl1 (319 aa).

Catalysis depends on Y50, which acts as the Proton donor. H112 is a substrate binding site. NAD(+) is bound by residues 166–167 (SN), 215–224 (SSFGPLSFLE), and 271–281 (KSNNPARLLQN).

It belongs to the aldo/keto reductase family.

It catalyses the reaction xylitol + NAD(+) = D-xylose + NADH + H(+). It carries out the reaction xylitol + NADP(+) = D-xylose + NADPH + H(+). The protein operates within carbohydrate metabolism; D-xylose degradation. In terms of biological role, catalyzes the initial reaction in the xylose utilization pathway by reducing D-xylose into xylitol. Xylose is a major component of hemicelluloses such as xylan. Most fungi utilize D-xylose via three enzymatic reactions, xylose reductase (XR), xylitol dehydrogenase (XDH), and xylulokinase, to form xylulose 5-phosphate, which enters pentose phosphate pathway. The protein is Probable NAD(P)H-dependent D-xylose reductase xyl1 (xyl1) of Emericella nidulans (strain FGSC A4 / ATCC 38163 / CBS 112.46 / NRRL 194 / M139) (Aspergillus nidulans).